We begin with the raw amino-acid sequence, 731 residues long: Catalase-peroxidase (731 aa).

Positions 98–227 form a cross-link, tryptophyl-tyrosyl-methioninium (Trp-Tyr) (with M-254); sequence WHAAGTYRTA…LAAIQMGLIY (130 aa). The active-site Proton acceptor is the histidine 99. Positions 227 to 254 form a cross-link, tryptophyl-tyrosyl-methioninium (Tyr-Met) (with W-98); that stretch reads YVNPEGPQGNPHDDEGMARDMKETFKRM. A heme b-binding site is contributed by histidine 269.

This sequence belongs to the peroxidase family. Peroxidase/catalase subfamily. In terms of assembly, homodimer or homotetramer. Heme b is required as a cofactor. Formation of the three residue Trp-Tyr-Met cross-link is important for the catalase, but not the peroxidase activity of the enzyme.

It carries out the reaction H2O2 + AH2 = A + 2 H2O. The catalysed reaction is 2 H2O2 = O2 + 2 H2O. Functionally, bifunctional enzyme with both catalase and broad-spectrum peroxidase activity. The chain is Catalase-peroxidase from Sphingopyxis alaskensis (strain DSM 13593 / LMG 18877 / RB2256) (Sphingomonas alaskensis).